The following is a 738-amino-acid chain: Prolyl oligopeptidase A (738 aa).

Active-site charge relay system residues include Ser-581, Asp-665, and His-701.

This sequence belongs to the peptidase S9A family. As to quaternary structure, monomer.

It catalyses the reaction Hydrolysis of Pro-|-Xaa &gt;&gt; Ala-|-Xaa in oligopeptides.. Functionally, housekeeping prolyl oligopeptidase (POP) that behaves like a conventional POP by cleaving peptide bonds on the C-terminal side of prolyl residues within peptides that are up to approximately 30 amino acids long. This chain is Prolyl oligopeptidase A, found in Galerina marginata (strain CBS 339.88).